The sequence spans 358 residues: Protein-glutamate methylesterase/protein-glutamine glutaminase 2 (358 aa).

A Response regulatory domain is found at R8–E125. Position 59 is a 4-aspartylphosphate (D59). Positions P157–A352 constitute a CheB-type methylesterase domain. Active-site residues include S177, H203, and D299.

The protein belongs to the CheB family. In terms of processing, phosphorylated by CheA. Phosphorylation of the N-terminal regulatory domain activates the methylesterase activity.

The protein resides in the cytoplasm. It catalyses the reaction [protein]-L-glutamate 5-O-methyl ester + H2O = L-glutamyl-[protein] + methanol + H(+). The catalysed reaction is L-glutaminyl-[protein] + H2O = L-glutamyl-[protein] + NH4(+). In terms of biological role, involved in chemotaxis. Part of a chemotaxis signal transduction system that modulates chemotaxis in response to various stimuli. Catalyzes the demethylation of specific methylglutamate residues introduced into the chemoreceptors (methyl-accepting chemotaxis proteins or MCP) by CheR. Also mediates the irreversible deamidation of specific glutamine residues to glutamic acid. This is Protein-glutamate methylesterase/protein-glutamine glutaminase 2 from Xanthomonas oryzae pv. oryzae (strain MAFF 311018).